The chain runs to 1236 residues: DNA-directed RNA polymerase subunit beta (1236 aa).

Residues 1193–1212 (PDVLDDDSYDQNNDEDIDEI) are disordered. Residues 1194–1212 (DVLDDDSYDQNNDEDIDEI) show a composition bias toward acidic residues.

It belongs to the RNA polymerase beta chain family. As to quaternary structure, the RNAP catalytic core consists of 2 alpha, 1 beta, 1 beta' and 1 omega subunit. When a sigma factor is associated with the core the holoenzyme is formed, which can initiate transcription.

It catalyses the reaction RNA(n) + a ribonucleoside 5'-triphosphate = RNA(n+1) + diphosphate. Its function is as follows. DNA-dependent RNA polymerase catalyzes the transcription of DNA into RNA using the four ribonucleoside triphosphates as substrates. This is DNA-directed RNA polymerase subunit beta from Clostridium beijerinckii (strain ATCC 51743 / NCIMB 8052) (Clostridium acetobutylicum).